Consider the following 535-residue polypeptide: Probable monogalactosyldiacylglycerol synthase, chloroplastic (535 aa).

The transit peptide at 1–113 directs the protein to the chloroplast; sequence MMQHSSSVTQ…KIPLGFASVG (113 aa).

It belongs to the glycosyltransferase 28 family.

Its subcellular location is the plastid. The protein resides in the chloroplast membrane. The enzyme catalyses a 1,2-diacyl-sn-glycerol + UDP-alpha-D-galactose = a 1,2-diacyl-3-O-(beta-D-galactosyl)-sn-glycerol + UDP + H(+). Involved in the synthesis of the major structural component of photosynthetic membranes. This chain is Probable monogalactosyldiacylglycerol synthase, chloroplastic (MGD A), found in Nicotiana tabacum (Common tobacco).